We begin with the raw amino-acid sequence, 1399 residues long: DNA-directed RNA polymerase subunit beta' (1399 aa).

The Zn(2+) site is built by cysteine 70, cysteine 72, cysteine 85, and cysteine 88. Residues aspartate 460, aspartate 462, and aspartate 464 each contribute to the Mg(2+) site. Residues cysteine 814, cysteine 888, cysteine 895, and cysteine 898 each coordinate Zn(2+).

This sequence belongs to the RNA polymerase beta' chain family. The RNAP catalytic core consists of 2 alpha, 1 beta, 1 beta' and 1 omega subunit. When a sigma factor is associated with the core the holoenzyme is formed, which can initiate transcription. Requires Mg(2+) as cofactor. The cofactor is Zn(2+).

It catalyses the reaction RNA(n) + a ribonucleoside 5'-triphosphate = RNA(n+1) + diphosphate. Functionally, DNA-dependent RNA polymerase catalyzes the transcription of DNA into RNA using the four ribonucleoside triphosphates as substrates. This chain is DNA-directed RNA polymerase subunit beta', found in Pseudomonas putida (strain GB-1).